The sequence spans 484 residues: MGCYSSKNLKQSKRTILEKPFVDIGKVYILGDELGQGQFGITRKCVEKTSGKTYACKTILKTNLKSREDEEAVKREIRIMKHLSGEPNIVEFKKAYEDRDSVHIVMEYCGGGELFKKIEALSKDGKSYSEKEAVEIIRPIVNVVKNCHYMGVMLRDLKPENFLLSSTDKNATVKAIDFGCSVFIEEGEVHRKFAGSAYYIAPEVLQGKYGKEADIWSAGIILYILLCGKPPFVTEPEAQMFSEIKSAKIDVDSESWKFIDVKAKHLVNRMLNRNPKERISAAEVLGHPWMKDGEASDKPIDGVVLSRLKQFRDMNKLKKVALKVIAANLSEEEIKGLKTLFTNIDTDKSGTITLEELKTGLTRLGSNLSKTEVEQLMEAADVDGNGTIDIDEFISATMHRYRLDRDDHVYQAFQHFDKDNDGHITKEELEMAMKEHGVGDEVSIKQIITEVDTDNDGKINFEEFRTMMRSGSSLQPQRELLPIK.

Gly-2 carries the N-myristoyl glycine lipid modification. Residues 28–290 (YILGDELGQG…AAEVLGHPWM (263 aa)) form the Protein kinase domain. Residues 34-42 (LGQGQFGIT) and Lys-57 contribute to the ATP site. The Proton acceptor role is filled by Asp-156. At Ser-196 the chain carries Phosphoserine. The autoinhibitory domain stretch occupies residues 295–325 (ASDKPIDGVVLSRLKQFRDMNKLKKVALKVI). EF-hand domains follow at residues 332–367 (EEIKGLKTLFTNIDTDKSGTITLEELKTGLTRLGSN), 368–403 (LSKTEVEQLMEAADVDGNGTIDIDEFISATMHRYRL), 404–439 (DRDDHVYQAFQHFDKDNDGHITKEELEMAMKEHGVG), and 444–474 (IKQIITEVDTDNDGKINFEEFRTMMRSGSSL). The Ca(2+) site is built by Asp-345, Asp-347, Ser-349, Thr-351, Glu-356, Asp-381, Asp-383, Asn-385, Thr-387, Glu-392, Asp-417, Asp-419, Asp-421, His-423, Glu-428, Asp-452, Asp-454, Asp-456, Lys-458, and Glu-463.

The protein belongs to the protein kinase superfamily. Ser/Thr protein kinase family. CDPK subfamily.

It is found in the membrane. The enzyme catalyses L-seryl-[protein] + ATP = O-phospho-L-seryl-[protein] + ADP + H(+). It carries out the reaction L-threonyl-[protein] + ATP = O-phospho-L-threonyl-[protein] + ADP + H(+). Its activity is regulated as follows. Activated by calcium. Autophosphorylation may play an important role in the regulation of the kinase activity. In terms of biological role, may play a role in signal transduction pathways that involve calcium as a second messenger. This is Calcium-dependent protein kinase 31 (CPK31) from Arabidopsis thaliana (Mouse-ear cress).